Here is a 261-residue protein sequence, read N- to C-terminus: Carnitinyl-CoA dehydratase (261 aa).

The active-site Nucleophile is the E111. Residue E131 is the Proton acceptor of the active site.

Belongs to the enoyl-CoA hydratase/isomerase family.

The catalysed reaction is (R)-carnitinyl-CoA = crotonobetainyl-CoA + H2O. It participates in amine and polyamine metabolism; carnitine metabolism. Catalyzes the reversible dehydration of L-carnitinyl-CoA to crotonobetainyl-CoA. This is Carnitinyl-CoA dehydratase from Escherichia coli O157:H7.